The following is a 440-amino-acid chain: Proline--tRNA ligase (440 aa).

The protein belongs to the class-II aminoacyl-tRNA synthetase family. ProS type 2 subfamily. As to quaternary structure, homodimer.

It is found in the cytoplasm. It carries out the reaction tRNA(Pro) + L-proline + ATP = L-prolyl-tRNA(Pro) + AMP + diphosphate. Its function is as follows. Catalyzes the attachment of proline to tRNA(Pro) in a two-step reaction: proline is first activated by ATP to form Pro-AMP and then transferred to the acceptor end of tRNA(Pro). In Rhizobium etli (strain ATCC 51251 / DSM 11541 / JCM 21823 / NBRC 15573 / CFN 42), this protein is Proline--tRNA ligase.